The primary structure comprises 337 residues: Acetyl-coenzyme A synthetase (337 aa).

CoA contacts are provided by residues 131 to 134, Thr-249, and Asn-273; that span reads RGGR. An ATP-binding site is contributed by 325 to 327; sequence GEP.

It belongs to the ATP-dependent AMP-binding enzyme family. It depends on Mg(2+) as a cofactor. Acetylated. Deacetylation by the SIR2-homolog deacetylase activates the enzyme.

It carries out the reaction acetate + ATP + CoA = acetyl-CoA + AMP + diphosphate. In terms of biological role, catalyzes the conversion of acetate into acetyl-CoA (AcCoA), an essential intermediate at the junction of anabolic and catabolic pathways. AcsA undergoes a two-step reaction. In the first half reaction, AcsA combines acetate with ATP to form acetyl-adenylate (AcAMP) intermediate. In the second half reaction, it can then transfer the acetyl group from AcAMP to the sulfhydryl group of CoA, forming the product AcCoA. The chain is Acetyl-coenzyme A synthetase (acsA) from Nostoc linckia.